The sequence spans 56 residues: MAVQKSKKSRSRRDMRRSHDAIDGPTLSVDSTTGETHRRHHVTADGYYKGRKVVNK.

Positions 1-16 (MAVQKSKKSRSRRDMR) are enriched in basic residues. The segment at 1-56 (MAVQKSKKSRSRRDMRRSHDAIDGPTLSVDSTTGETHRRHHVTADGYYKGRKVVNK) is disordered.

This sequence belongs to the bacterial ribosomal protein bL32 family.

This chain is Large ribosomal subunit protein bL32, found in Idiomarina loihiensis (strain ATCC BAA-735 / DSM 15497 / L2-TR).